The sequence spans 131 residues: Small ribosomal subunit protein uS8 (131 aa).

It belongs to the universal ribosomal protein uS8 family. Part of the 30S ribosomal subunit. Contacts proteins S5 and S12.

Functionally, one of the primary rRNA binding proteins, it binds directly to 16S rRNA central domain where it helps coordinate assembly of the platform of the 30S subunit. The chain is Small ribosomal subunit protein uS8 from Neorickettsia sennetsu (strain ATCC VR-367 / Miyayama) (Ehrlichia sennetsu).